Reading from the N-terminus, the 126-residue chain is 13 kDa ribonucleoprotein-associated protein (126 aa).

The protein belongs to the eukaryotic ribosomal protein eL8 family. In terms of assembly, component of the U3 snoRNP particle. Binds to the C'/D and B/C motifs in U3 snoRNA. Component of the 25S U4/U6.U5 tri-snRNP particle, a subcomplex of the spliceosome. Binds to the 5' stem-loop of U4 snRNA.

The protein localises to the nucleus. Its subcellular location is the nucleolus. Functionally, common component of the spliceosome and rRNA processing machinery. In association with the spliceosomal U4/U6.U5 tri-snRNP particle, required for splicing of pre-mRNA. In association with box C/D snoRNPs, required for processing of pre-ribosomal RNA (rRNA) and site-specific 2'-O-methylation of substrate RNAs. Essential for the accumulation and stability of U4 snRNA, U6 snRNA, and box C/D snoRNAs. The sequence is that of 13 kDa ribonucleoprotein-associated protein (SNU13) from Candida albicans (strain SC5314 / ATCC MYA-2876) (Yeast).